We begin with the raw amino-acid sequence, 570 residues long: CRISPR-associated protein Cas8a1/Csx13 (570 aa).

Disordered regions lie at residues 1–23 (MACM…AGLR) and 551–570 (GGEA…SEQS).

It belongs to the CRISPR-associated protein Cas8a1/Csx13 family. Myxan subtype subfamily.

CRISPR (clustered regularly interspaced short palindromic repeat) is an adaptive immune system that provides protection against mobile genetic elements (viruses, transposable elements and conjugative plasmids). CRISPR clusters contain spacers, sequences complementary to antecedent mobile elements, and target invading nucleic acids. CRISPR clusters are transcribed and processed into CRISPR RNA (crRNA). In terms of biological role, functions in an unknown fashion to stimulate transcription of fruA independently of the intracellular A- and E-developmental signals. The chain is CRISPR-associated protein Cas8a1/Csx13 (devT) from Myxococcus xanthus (strain DK1622).